The primary structure comprises 228 residues: Ribulose-phosphate 3-epimerase-like protein 1 (228 aa).

Ser-10 is a substrate binding site. Residues His-35, Asp-37, and His-70 each coordinate a divalent metal cation. Asp-37 serves as the catalytic Proton acceptor. Substrate is bound by residues His-70, 146 to 149 (GFGE), 175 to 177 (DGG), and 197 to 198 (GS). A divalent metal cation is bound at residue Asp-175. Asp-175 functions as the Proton donor in the catalytic mechanism.

It belongs to the ribulose-phosphate 3-epimerase family. As to quaternary structure, homodimer. Requires Fe(2+) as cofactor. Mn(2+) serves as cofactor. The cofactor is Zn(2+). It depends on Co(2+) as a cofactor.

The enzyme catalyses D-ribulose 5-phosphate = D-xylulose 5-phosphate. Its pathway is carbohydrate degradation. Catalyzes the reversible epimerization of D-ribulose 5-phosphate to D-xylulose 5-phosphate. This chain is Ribulose-phosphate 3-epimerase-like protein 1 (RPEL1), found in Homo sapiens (Human).